A 280-amino-acid polypeptide reads, in one-letter code: uncharacterized protein (280 aa).

Transmembrane regions (helical) follow at residues 3-23 (ILITALEQSLIMLPLILGMYI), 52-72 (FGLFHALIFAIIAGGINGSIV), 81-101 (INGLIAGILANFMLYSVNLQI), 123-143 (NWLVPLILINSFIIVIVLILL), 196-216 (FADINMGYGVALVGIGAIIIG), and 233-253 (IFACFIGILFYFISLSILLHI).

It localises to the cell membrane. This is an uncharacterized protein from Rickettsia prowazekii (strain Madrid E).